Consider the following 254-residue polypeptide: MRQLINHIVNHDLFRWSVVTAMIFYRYSETCMEVTVRVGDPVTLGSGHGYHPGQKVHWYNQSCVGIGNGENTHPICTYDPPKPGRQKTMKTTPLPSPLLYECHNSTLSILHVNVSDPRNYCRRKCPPKGNCEFPTCFTLSLISRTTTRKPEQKTTLLRLKTTPNKHTQHKRSTRRTSPKDYNVTGLPKGFADSFTGNVEAHRTKDAAHSAWILIIIIIIIVVILFFFKIPQRLREKWDTKGYLYKGTDGLPTTD.

The interval 163 to 182 (PNKHTQHKRSTRRTSPKDYN) is disordered. A compositionally biased stretch (basic residues) spans 166–176 (HTQHKRSTRRT). A helical membrane pass occupies residues 207 to 227 (AHSAWILIIIIIIIVVILFFF).

The protein belongs to the RL11 family.

The protein resides in the host membrane. This is an uncharacterized protein from Human cytomegalovirus (strain Merlin) (HHV-5).